We begin with the raw amino-acid sequence, 148 residues long: MPTFKLVLSDPMSGKARQFEVKDPLAQRFIGLKIGDELDGQVLKELIELPKGAKVKITGGSGIEGAPMHPGIPGPVKRYVLADSRPGYHPPKRGMKKKKLMRGNTISDTIVQINAVVVYPEGYAGPPAIPLGAKELQKEKKTEEAPAQ.

This sequence belongs to the eukaryotic ribosomal protein eS6 family.

This Pyrobaculum neutrophilum (strain DSM 2338 / JCM 9278 / NBRC 100436 / V24Sta) (Thermoproteus neutrophilus) protein is Small ribosomal subunit protein eS6.